The sequence spans 246 residues: uncharacterized protein (246 aa).

This is an uncharacterized protein from Acanthamoeba polyphaga (Amoeba).